We begin with the raw amino-acid sequence, 132 residues long: Small ribosomal subunit protein uS8c (132 aa).

The protein belongs to the universal ribosomal protein uS8 family. In terms of assembly, part of the 30S ribosomal subunit.

It localises to the plastid. Its subcellular location is the chloroplast. In terms of biological role, one of the primary rRNA binding proteins, it binds directly to 16S rRNA central domain where it helps coordinate assembly of the platform of the 30S subunit. The protein is Small ribosomal subunit protein uS8c (rps8) of Thalassiosira pseudonana (Marine diatom).